Reading from the N-terminus, the 181-residue chain is ATP synthase subunit delta (181 aa).

It belongs to the ATPase delta chain family. In terms of assembly, F-type ATPases have 2 components, F(1) - the catalytic core - and F(0) - the membrane proton channel. F(1) has five subunits: alpha(3), beta(3), gamma(1), delta(1), epsilon(1). F(0) has three main subunits: a(1), b(2) and c(10-14). The alpha and beta chains form an alternating ring which encloses part of the gamma chain. F(1) is attached to F(0) by a central stalk formed by the gamma and epsilon chains, while a peripheral stalk is formed by the delta and b chains.

The protein localises to the cell membrane. Its function is as follows. F(1)F(0) ATP synthase produces ATP from ADP in the presence of a proton or sodium gradient. F-type ATPases consist of two structural domains, F(1) containing the extramembraneous catalytic core and F(0) containing the membrane proton channel, linked together by a central stalk and a peripheral stalk. During catalysis, ATP synthesis in the catalytic domain of F(1) is coupled via a rotary mechanism of the central stalk subunits to proton translocation. This protein is part of the stalk that links CF(0) to CF(1). It either transmits conformational changes from CF(0) to CF(1) or is implicated in proton conduction. The sequence is that of ATP synthase subunit delta from Bacillus pumilus (strain SAFR-032).